Here is a 245-residue protein sequence, read N- to C-terminus: tRNA (guanine-N(1)-)-methyltransferase (245 aa).

Residues glycine 111 and 131–136 (IGDYVL) each bind S-adenosyl-L-methionine.

This sequence belongs to the RNA methyltransferase TrmD family. As to quaternary structure, homodimer.

It is found in the cytoplasm. The enzyme catalyses guanosine(37) in tRNA + S-adenosyl-L-methionine = N(1)-methylguanosine(37) in tRNA + S-adenosyl-L-homocysteine + H(+). Functionally, specifically methylates guanosine-37 in various tRNAs. In Staphylococcus carnosus (strain TM300), this protein is tRNA (guanine-N(1)-)-methyltransferase.